A 303-amino-acid chain; its full sequence is Putative S-adenosyl-L-methionine-dependent methyltransferase ML2020 (303 aa).

S-adenosyl-L-methionine contacts are provided by residues Asp-130 and 159 to 160; that span reads DL.

This sequence belongs to the UPF0677 family.

Functionally, exhibits S-adenosyl-L-methionine-dependent methyltransferase activity. This Mycobacterium leprae (strain TN) protein is Putative S-adenosyl-L-methionine-dependent methyltransferase ML2020.